The sequence spans 644 residues: Protein cueball (644 aa).

The N-terminal stretch at 1 to 26 (MIRIRFGMDVLLVVLLATCLLTPAHG) is a signal peptide. At 27–531 (TPLEWDFAVT…VCLTPRVWTS (505 aa)) the chain is on the extracellular side. N-linked (GlcNAc...) asparagine glycosylation is found at Asn82 and Asn108. LDL-receptor class B repeat units follow at residues 121–166 (MNLF…DVCR), 167–211 (RKLY…DQLS), and 212–257 (DRLF…TNDA). 2 N-linked (GlcNAc...) asparagine glycosylation sites follow: Asn175 and Asn190. A glycan (N-linked (GlcNAc...) asparagine) is linked at Asn313. 2 consecutive EGF-like domains span residues 398–430 (EIRECHNYCVHGTCQMSELAYPKCYCQPGFTGE) and 433–471 (ELSVCSGLCLNGGHCRVSKDENEAPSCECPAKFGGARCE). 5 disulfides stabilise this stretch: Cys402–Cys411, Cys406–Cys421, Cys437–Cys447, Cys441–Cys459, and Cys461–Cys470. Residues Asn473 and Asn508 are each glycosylated (N-linked (GlcNAc...) asparagine). Residues 532 to 552 (SVIIILVVGIVSSLLLVAVIV) form a helical membrane-spanning segment. The Cytoplasmic portion of the chain corresponds to 553-644 (HGIRRLYKPK…LIHNMEDDLY (92 aa)).

It belongs to the cueball family.

It is found in the cell membrane. Has a role in spermatogenesis and oogenesis. The chain is Protein cueball from Drosophila simulans (Fruit fly).